Here is a 273-residue protein sequence, read N- to C-terminus: Dermonecrotic toxin LarSicTox-alphaIB1aiv (273 aa).

The active site involves His-5. The Mg(2+) site is built by Glu-25 and Asp-27. His-41 serves as the catalytic Nucleophile. Cystine bridges form between Cys-45–Cys-51 and Cys-47–Cys-190. Asp-85 provides a ligand contact to Mg(2+). N-linked (GlcNAc...) asparagine glycosylation occurs at Asn-250.

It belongs to the arthropod phospholipase D family. Class II subfamily. It depends on Mg(2+) as a cofactor. As to expression, expressed by the venom gland.

It localises to the secreted. It carries out the reaction an N-(acyl)-sphingosylphosphocholine = an N-(acyl)-sphingosyl-1,3-cyclic phosphate + choline. It catalyses the reaction an N-(acyl)-sphingosylphosphoethanolamine = an N-(acyl)-sphingosyl-1,3-cyclic phosphate + ethanolamine. The enzyme catalyses a 1-acyl-sn-glycero-3-phosphocholine = a 1-acyl-sn-glycero-2,3-cyclic phosphate + choline. The catalysed reaction is a 1-acyl-sn-glycero-3-phosphoethanolamine = a 1-acyl-sn-glycero-2,3-cyclic phosphate + ethanolamine. In terms of biological role, dermonecrotic toxins cleave the phosphodiester linkage between the phosphate and headgroup of certain phospholipids (sphingolipid and lysolipid substrates), forming an alcohol (often choline) and a cyclic phosphate. This toxin acts on sphingomyelin (SM). It may also act on ceramide phosphoethanolamine (CPE), lysophosphatidylcholine (LPC) and lysophosphatidylethanolamine (LPE), but not on lysophosphatidylserine (LPS), and lysophosphatidylglycerol (LPG). It acts by transphosphatidylation, releasing exclusively cyclic phosphate products as second products. Induces dermonecrosis, hemolysis, increased vascular permeability, edema, inflammatory response, and platelet aggregation. The sequence is that of Dermonecrotic toxin LarSicTox-alphaIB1aiv from Loxosceles arizonica (Arizona brown spider).